The chain runs to 55 residues: ATP synthase F(0) complex subunit 8 (55 aa).

Residues 4-24 (LNPAPWFMIFMFTWAIFLTIL) form a helical membrane-spanning segment. Residues 34 to 55 (PNEPSPQGMTTPKTAPWNWPWH) form a disordered region.

It belongs to the ATPase protein 8 family. In terms of assembly, component of the ATP synthase complex composed at least of ATP5F1A/subunit alpha, ATP5F1B/subunit beta, ATP5MC1/subunit c (homooctomer), MT-ATP6/subunit a, MT-ATP8/subunit 8, ATP5ME/subunit e, ATP5MF/subunit f, ATP5MG/subunit g, ATP5MK/subunit k, ATP5MJ/subunit j, ATP5F1C/subunit gamma, ATP5F1D/subunit delta, ATP5F1E/subunit epsilon, ATP5PF/subunit F6, ATP5PB/subunit b, ATP5PD/subunit d, ATP5PO/subunit OSCP. ATP synthase complex consists of a soluble F(1) head domain (subunits alpha(3) and beta(3)) - the catalytic core - and a membrane F(0) domain - the membrane proton channel (subunits c, a, 8, e, f, g, k and j). These two domains are linked by a central stalk (subunits gamma, delta, and epsilon) rotating inside the F1 region and a stationary peripheral stalk (subunits F6, b, d, and OSCP).

Its subcellular location is the mitochondrion membrane. Subunit 8, of the mitochondrial membrane ATP synthase complex (F(1)F(0) ATP synthase or Complex V) that produces ATP from ADP in the presence of a proton gradient across the membrane which is generated by electron transport complexes of the respiratory chain. ATP synthase complex consist of a soluble F(1) head domain - the catalytic core - and a membrane F(1) domain - the membrane proton channel. These two domains are linked by a central stalk rotating inside the F(1) region and a stationary peripheral stalk. During catalysis, ATP synthesis in the catalytic domain of F(1) is coupled via a rotary mechanism of the central stalk subunits to proton translocation. In vivo, can only synthesize ATP although its ATP hydrolase activity can be activated artificially in vitro. Part of the complex F(0) domain. This Gadus morhua (Atlantic cod) protein is ATP synthase F(0) complex subunit 8.